The primary structure comprises 203 residues: MDFPKVLLIRHFTEVLGMKYAGEGGEVLWFEEGLNRVAVGIYFTDLYEEAELYKRVGALMGLGASKVFLAVLPDALAFVDPRYFKANGVGLVVVDPAKGVDGVEVKIFARARPAAVEPLKIDAVKAALHEYLASELKRVEESLFEKVRRYVDQRVEEVKRALQAVEEAKRAAPPVQRAAAESAQEPRGGIGENEWVKILRSKR.

Interacts with crenactin.

The protein localises to the cytoplasm. The protein resides in the cytoskeleton. Functionally, part of an actin-like archaeal cytoskeleton. Prevents polymerization of crenactin filaments by binding its C-terminus into crenactin's hydrophobic groove. May act by competing with the D-loop of the following crenactin subunit for the hydrophobic groove. This is Arcadin-2 from Pyrobaculum calidifontis (strain DSM 21063 / JCM 11548 / VA1).